A 176-amino-acid polypeptide reads, in one-letter code: RNA pyrophosphohydrolase (176 aa).

The Nudix hydrolase domain occupies 6-149; that stretch reads GYRPNVGIVI…KRDVYRRVMK (144 aa). Positions 38–59 match the Nudix box motif; the sequence is GGINPGESAEQAMYRELFEEVG.

The protein belongs to the Nudix hydrolase family. RppH subfamily. Requires a divalent metal cation as cofactor.

Functionally, accelerates the degradation of transcripts by removing pyrophosphate from the 5'-end of triphosphorylated RNA, leading to a more labile monophosphorylated state that can stimulate subsequent ribonuclease cleavage. This is RNA pyrophosphohydrolase from Salmonella paratyphi C (strain RKS4594).